Reading from the N-terminus, the 252-residue chain is MILHAQAKHGKPGLPWLVFLHGFSGDCHEWQEVGEAFADYSRLYVDLPGHGGSAAISVDGFDDVTDLLRKTLVSYNILDFWLVGYSLGGRVAMMAACQGLTGLCGVIVEGGHPGLQNAEQRAERQRSDRQWAQRFCTEPLTAVFADWYQQPVFASLNDDQRRELVVLRSNNNGATLAAMLEATSLAVQPDLRANLSARTFAFYYLCGERDSKFRALAAELAADCHVIPRAGHNAHRENPAGVIASLAQILRF.

The protein belongs to the AB hydrolase superfamily. MenH family. Monomer.

It catalyses the reaction 5-enolpyruvoyl-6-hydroxy-2-succinyl-cyclohex-3-ene-1-carboxylate = (1R,6R)-6-hydroxy-2-succinyl-cyclohexa-2,4-diene-1-carboxylate + pyruvate. It participates in quinol/quinone metabolism; 1,4-dihydroxy-2-naphthoate biosynthesis; 1,4-dihydroxy-2-naphthoate from chorismate: step 3/7. The protein operates within quinol/quinone metabolism; menaquinone biosynthesis. Functionally, catalyzes a proton abstraction reaction that results in 2,5-elimination of pyruvate from 2-succinyl-5-enolpyruvyl-6-hydroxy-3-cyclohexene-1-carboxylate (SEPHCHC) and the formation of 2-succinyl-6-hydroxy-2,4-cyclohexadiene-1-carboxylate (SHCHC). The polypeptide is 2-succinyl-6-hydroxy-2,4-cyclohexadiene-1-carboxylate synthase (Escherichia coli O9:H4 (strain HS)).